Reading from the N-terminus, the 619-residue chain is Teichoic acid poly(ribitol-phosphate) polymerase (619 aa).

The protein belongs to the CDP-glycerol glycerophosphotransferase family.

It localises to the cell membrane. It catalyses the reaction 4-O-[1-D-ribitylphospho-(2R)-1-glycerylphospho]-N-acetyl-beta-D-mannosaminyl-(1-&gt;4)-N-acetyl-alpha-D-glucosaminyl di-trans,octa-cis-undecaprenyl diphosphate + n CDP-L-ribitol = 4-O-[(D-ribitylphospho)(n)-D-ribitylphospho-(2R)-glycerylphospho]-N-acetyl-beta-D-mannosaminyl-(1-&gt;4)-N-acetyl-alpha-D-glucosaminyl di-trans,octa-cis-undecaprenyl diphosphate + n CMP + n H(+). Its pathway is cell wall biogenesis; poly(ribitol phosphate) teichoic acid biosynthesis. Functionally, responsible for the polymerization of the main chain of the major teichoic acid by sequential transfer of ribitol phosphate units from CDP-ribitol to the glycerol phosphate attached to the disaccharide linkage unit. Synthesizes polymers of up to 40 ribitol phosphate units in length. The chain is Teichoic acid poly(ribitol-phosphate) polymerase (tarL) from Bacillus spizizenii (strain ATCC 23059 / NRRL B-14472 / W23) (Bacillus subtilis subsp. spizizenii).